A 109-amino-acid chain; its full sequence is Cell division protein FtsL (109 aa).

Residues 1–3 (MSR) lie on the Cytoplasmic side of the membrane. Residues 4-21 (LNIFLLIIVMGCALSVVN) form a helical membrane-spanning segment. At 22 to 109 (STNQQRQIFI…ASAAPTGGAR (88 aa)) the chain is on the periplasmic side.

It belongs to the FtsL family. As to quaternary structure, part of a complex composed of FtsB, FtsL and FtsQ.

Its subcellular location is the cell inner membrane. In terms of biological role, essential cell division protein. May link together the upstream cell division proteins, which are predominantly cytoplasmic, with the downstream cell division proteins, which are predominantly periplasmic. The protein is Cell division protein FtsL of Burkholderia pseudomallei (strain K96243).